A 155-amino-acid polypeptide reads, in one-letter code: Transcriptional repressor NrdR (155 aa).

A zinc finger spans residues 3–34 (CPFCGNVDTQVKDSRPAEDHVSIRRRRFCPAC). One can recognise an ATP-cone domain in the interval 49–139 (LVVIKTNGKR…VYKNFQAADD (91 aa)).

It belongs to the NrdR family. It depends on Zn(2+) as a cofactor.

In terms of biological role, negatively regulates transcription of bacterial ribonucleotide reductase nrd genes and operons by binding to NrdR-boxes. The protein is Transcriptional repressor NrdR of Ruegeria sp. (strain TM1040) (Silicibacter sp.).